The following is a 985-amino-acid chain: DNA ligase 4 (985 aa).

Disordered regions lie at residues 1–27 (MDRLNNVGGETERELDEKYPNRPRNKH) and 43–70 (LNGNKKRPTGPAAARKKLGPHGGQQTLS). Basic and acidic residues predominate over residues 10 to 20 (ETERELDEKYP). The segment covering 46–61 (NKKRPTGPAAARKKLG) has biased composition (basic residues). E310, K312, L313, R317, E379, F420, E480, K485, K502, and K504 together coordinate ATP. K312 acts as the N6-AMP-lysine intermediate in catalysis. Position 379 (E379) interacts with Mg(2+). E480 is a Mg(2+) binding site. BRCT domains lie at 711 to 804 (PSGH…PDLL) and 878 to 983 (LRGW…RFAP).

Belongs to the ATP-dependent DNA ligase family. Mg(2+) serves as cofactor.

The protein resides in the nucleus. The enzyme catalyses ATP + (deoxyribonucleotide)n-3'-hydroxyl + 5'-phospho-(deoxyribonucleotide)m = (deoxyribonucleotide)n+m + AMP + diphosphate.. Functionally, DNA ligase involved in DNA non-homologous end joining (NHEJ); required for double-strand break (DSB) repair. The protein is DNA ligase 4 (LIG4) of Coccidioides immitis (strain RS) (Valley fever fungus).